Here is a 233-residue protein sequence, read N- to C-terminus: Phosphoglycolate phosphatase 2 (233 aa).

Asp-13 acts as the Nucleophile in catalysis. The Mg(2+) site is built by Asp-13 and Asp-15. Lys-152 lines the substrate pocket. Residues Asp-174 and Asp-178 each contribute to the Mg(2+) site.

It belongs to the archaeal SPP-like hydrolase family. Mg(2+) is required as a cofactor.

It catalyses the reaction 2-phosphoglycolate + H2O = glycolate + phosphate. Catalyzes the dephosphorylation of 2-phosphoglycolate. The chain is Phosphoglycolate phosphatase 2 from Saccharolobus solfataricus (strain ATCC 35092 / DSM 1617 / JCM 11322 / P2) (Sulfolobus solfataricus).